The chain runs to 606 residues: MPHRIRILPEILTNKIAAGEVVERPASVVKELVENALDAGCGEIIVEIEGGGRRLIRITDDGCGMSREDALMALERHATSKIATDDDLFSLATLGFRGEALPSVASVSRFTLATRERGSIEGTEIYAEGGKIREVKACGMAEGTVVSVRNLFFNTPARLKFMKSVETEGGHVADLVTRLALSRPEVRFTCVSDGKTLFRALDGTLLDRVAALLGKTVASALHPVDLATEGVRVTGLVARPDVSRSAASHLYTYINGRFIRDRVVQHAILQAYRNFLERGRYPVVVLFIEVSPGEVDVNVHPTKHEVRFRQQGIVHDVIQGAVEETLRLTPWIRRSESPVAAPLAVPRPQQYVQGTGARQVEEVRELLENYRPAVAPHRPLFAPQPAPQPDREPPLPDSGSRMLDDTAVRRHGGYFSSLAVIGQYNASYILCQDGSDLVIIDQHAAHERVAFERLKTQFAAGRVEGQGLLFPETVELSHRESAVVREHGGELGRLGFDLEDFGGTTWIVKGIPRLLAGTDYLRLLRDTLEELQSLGASRSIADAVEDILTRVACHSVVRGEHPLTTGEIEALFAHMDATDFSTNCPHGRPVLQRLTLGEVEKMFKRV.

A disordered region spans residues 377 to 401; sequence HRPLFAPQPAPQPDREPPLPDSGSR.

It belongs to the DNA mismatch repair MutL/HexB family.

This protein is involved in the repair of mismatches in DNA. It is required for dam-dependent methyl-directed DNA mismatch repair. May act as a 'molecular matchmaker', a protein that promotes the formation of a stable complex between two or more DNA-binding proteins in an ATP-dependent manner without itself being part of a final effector complex. The polypeptide is DNA mismatch repair protein MutL (Geobacter sulfurreducens (strain ATCC 51573 / DSM 12127 / PCA)).